The chain runs to 415 residues: 8-amino-7-oxononanoate synthase (415 aa).

Substrate is bound at residue Arg-21. 117–118 (GY) provides a ligand contact to pyridoxal 5'-phosphate. His-149 lines the substrate pocket. The pyridoxal 5'-phosphate site is built by Ser-195, His-223, and Thr-251. Position 254 is an N6-(pyridoxal phosphate)lysine (Lys-254). A substrate-binding site is contributed by Thr-374.

Belongs to the class-II pyridoxal-phosphate-dependent aminotransferase family. BioF subfamily. Homodimer. It depends on pyridoxal 5'-phosphate as a cofactor.

It carries out the reaction 6-carboxyhexanoyl-[ACP] + L-alanine + H(+) = (8S)-8-amino-7-oxononanoate + holo-[ACP] + CO2. It functions in the pathway cofactor biosynthesis; biotin biosynthesis. Catalyzes the decarboxylative condensation of pimeloyl-[acyl-carrier protein] and L-alanine to produce 8-amino-7-oxononanoate (AON), [acyl-carrier protein], and carbon dioxide. The protein is 8-amino-7-oxononanoate synthase of Ralstonia pickettii (strain 12J).